A 370-amino-acid polypeptide reads, in one-letter code: GDSL esterase/lipase At1g33811 (370 aa).

The first 24 residues, 1–24 (MGILRFVLLISLNLVLFGFKTTVS), serve as a signal peptide directing secretion. The active-site Nucleophile is the Ser41. N-linked (GlcNAc...) asparagine glycosylation is found at Asn203, Asn241, and Asn242. Catalysis depends on residues Asp336 and His339.

It belongs to the 'GDSL' lipolytic enzyme family.

It localises to the secreted. The protein is GDSL esterase/lipase At1g33811 of Arabidopsis thaliana (Mouse-ear cress).